A 752-amino-acid chain; its full sequence is Phosphatidylinositol 4-phosphate 5-kinase 1 (752 aa).

MORN repeat units follow at residues 81 to 103, 104 to 126, 127 to 149, 150 to 172, 173 to 195, 196 to 218, and 219 to 241; these read YIGS…DGCM, YEGD…SGAT, YEGE…DGDT, YRGT…NGDF, YEGT…NGNQ, YTGE…NGNR, and YEGL…DGSS. Residues 349–748 form the PIPK domain; the sequence is SKGHKKYDLM…RFRDFISRIF (400 aa). The segment at 708-729 is activation loop; sequence YDITKKIEHAYKSLQADPASIS.

In terms of processing, phosphorylation inactivates the enzyme. As to expression, expressed in the whole plant, preferentially in roots. Strongly expressed in meristematic tissues, namely procambial cell layers.

The catalysed reaction is a 1,2-diacyl-sn-glycero-3-phospho-(1D-myo-inositol 4-phosphate) + ATP = a 1,2-diacyl-sn-glycero-3-phospho-(1D-myo-inositol-4,5-bisphosphate) + ADP + H(+). Functionally, catalyzes the synthesis of phosphatidylinositol 4,5-bisphosphate and phosphatidylinositol 3,4-bisphosphate. The protein is Phosphatidylinositol 4-phosphate 5-kinase 1 (PIP5K1) of Arabidopsis thaliana (Mouse-ear cress).